The sequence spans 311 residues: Ribosomal RNA small subunit methyltransferase H (311 aa).

S-adenosyl-L-methionine-binding positions include 32 to 34 (AGH), Asp52, Phe79, Asp100, and Gln107.

It belongs to the methyltransferase superfamily. RsmH family.

Its subcellular location is the cytoplasm. It catalyses the reaction cytidine(1402) in 16S rRNA + S-adenosyl-L-methionine = N(4)-methylcytidine(1402) in 16S rRNA + S-adenosyl-L-homocysteine + H(+). Functionally, specifically methylates the N4 position of cytidine in position 1402 (C1402) of 16S rRNA. This is Ribosomal RNA small subunit methyltransferase H from Staphylococcus aureus (strain bovine RF122 / ET3-1).